We begin with the raw amino-acid sequence, 200 residues long: Holliday junction branch migration complex subunit RuvA (200 aa).

The segment at 1–64 (MIAHLTGLVG…EDAFLLYGFA (64 aa)) is domain I. The tract at residues 65–143 (EAAERDWFRL…RMPAGPGVTI (79 aa)) is domain II. The tract at residues 144–147 (AAPP) is flexible linker. The tract at residues 148–200 (ASGGVEADALLALAGLGFRRAEAQPVVGRILARLDGKADLDVVIRESLRELAR) is domain III.

Belongs to the RuvA family. In terms of assembly, homotetramer. Forms an RuvA(8)-RuvB(12)-Holliday junction (HJ) complex. HJ DNA is sandwiched between 2 RuvA tetramers; dsDNA enters through RuvA and exits via RuvB. An RuvB hexamer assembles on each DNA strand where it exits the tetramer. Each RuvB hexamer is contacted by two RuvA subunits (via domain III) on 2 adjacent RuvB subunits; this complex drives branch migration. In the full resolvosome a probable DNA-RuvA(4)-RuvB(12)-RuvC(2) complex forms which resolves the HJ.

It is found in the cytoplasm. In terms of biological role, the RuvA-RuvB-RuvC complex processes Holliday junction (HJ) DNA during genetic recombination and DNA repair, while the RuvA-RuvB complex plays an important role in the rescue of blocked DNA replication forks via replication fork reversal (RFR). RuvA specifically binds to HJ cruciform DNA, conferring on it an open structure. The RuvB hexamer acts as an ATP-dependent pump, pulling dsDNA into and through the RuvAB complex. HJ branch migration allows RuvC to scan DNA until it finds its consensus sequence, where it cleaves and resolves the cruciform DNA. The chain is Holliday junction branch migration complex subunit RuvA from Gluconacetobacter diazotrophicus (strain ATCC 49037 / DSM 5601 / CCUG 37298 / CIP 103539 / LMG 7603 / PAl5).